A 201-amino-acid chain; its full sequence is Recombination protein RecR (201 aa).

The C4-type zinc-finger motif lies at 57–72 (CKSCRTFTEEDECAIC). Positions 81–176 (GQLCVVEMPA…KVTRIAHGIP (96 aa)) constitute a Toprim domain.

The protein belongs to the RecR family.

May play a role in DNA repair. It seems to be involved in an RecBC-independent recombinational process of DNA repair. It may act with RecF and RecO. The chain is Recombination protein RecR from Glaesserella parasuis serovar 5 (strain SH0165) (Haemophilus parasuis).